A 59-amino-acid chain; its full sequence is ATP synthase subunit J, mitochondrial (59 aa).

A helical transmembrane segment spans residues 9-25 (ILKVYWPFFVAGAAVYY).

The protein belongs to the ATPase j subunit family. In terms of assembly, F-type ATPases have 2 components, CF(1) - the catalytic core - and CF(0) - the membrane proton channel. In yeast, the dimeric form of ATP synthase consists of 17 polypeptides: alpha, beta, gamma, delta, epsilon, 4 (B), 5 (OSCP), 6 (A), 8, 9 (C), d, E (Tim11), f, g, h, i/j and k.

The protein resides in the mitochondrion membrane. Functionally, mitochondrial membrane ATP synthase (F(1)F(0) ATP synthase or Complex V) produces ATP from ADP in the presence of a proton gradient across the membrane which is generated by electron transport complexes of the respiratory chain. F-type ATPases consist of two structural domains, F(1) - containing the extramembraneous catalytic core and F(0) - containing the membrane proton channel, linked together by a central stalk and a peripheral stalk. During catalysis, ATP synthesis in the catalytic domain of F(1) is coupled via a rotary mechanism of the central stalk subunits to proton translocation. Part of the complex F(0) domain. Minor subunit located with subunit a in the membrane. This Saccharomyces cerevisiae (strain ATCC 204508 / S288c) (Baker's yeast) protein is ATP synthase subunit J, mitochondrial (ATP18).